The chain runs to 181 residues: Inner membrane-spanning protein YciB (181 aa).

A run of 5 helical transmembrane segments spans residues 3-23, 54-74, 81-101, 119-139, and 149-169; these read LLFD…FGIY, SLAI…PWFI, IYWL…KPLI, LNLA…YVAY, and FKLF…AFYL.

Belongs to the YciB family.

Its subcellular location is the cell inner membrane. Plays a role in cell envelope biogenesis, maintenance of cell envelope integrity and membrane homeostasis. This chain is Inner membrane-spanning protein YciB, found in Legionella pneumophila (strain Corby).